A 436-amino-acid chain; its full sequence is Type II methyltransferase M.BsuRI (436 aa).

Positions I59–Y409 constitute an SAM-dependent MTase C5-type domain. C157 is a catalytic residue.

Belongs to the class I-like SAM-binding methyltransferase superfamily. C5-methyltransferase family. In terms of assembly, monomer.

It catalyses the reaction a 2'-deoxycytidine in DNA + S-adenosyl-L-methionine = a 5-methyl-2'-deoxycytidine in DNA + S-adenosyl-L-homocysteine + H(+). In terms of biological role, a methylase, recognizes the double-stranded sequence 5'-GGCC-3', methylates C-3 on both strands, and protects the DNA from cleavage by the BsuRI endonuclease. In Bacillus subtilis, this protein is Type II methyltransferase M.BsuRI (hsdRM).